The following is a 326-amino-acid chain: Neuferricin homolog (326 aa).

Residues 1–34 form the signal peptide; that stretch reads MEKNRRKKDDAGVMTKTLAGVAALTFLVSFICSS. The 100-residue stretch at 98 to 197 folds into the Cytochrome b5 heme-binding domain; that stretch reads KHVFTPEQLH…KEYPLVGVVA (100 aa).

This sequence belongs to the cytochrome b5 family. MAPR subfamily.

It localises to the secreted. In terms of biological role, heme-binding protein. This is Neuferricin homolog from Caenorhabditis briggsae.